A 431-amino-acid chain; its full sequence is Histidine--tRNA ligase (431 aa).

Belongs to the class-II aminoacyl-tRNA synthetase family. As to quaternary structure, homodimer.

It is found in the cytoplasm. It catalyses the reaction tRNA(His) + L-histidine + ATP = L-histidyl-tRNA(His) + AMP + diphosphate + H(+). The sequence is that of Histidine--tRNA ligase from Neisseria meningitidis serogroup A / serotype 4A (strain DSM 15465 / Z2491).